The sequence spans 201 residues: 3-isopropylmalate dehydratase small subunit (201 aa).

It belongs to the LeuD family. LeuD type 1 subfamily. Heterodimer of LeuC and LeuD.

It catalyses the reaction (2R,3S)-3-isopropylmalate = (2S)-2-isopropylmalate. It functions in the pathway amino-acid biosynthesis; L-leucine biosynthesis; L-leucine from 3-methyl-2-oxobutanoate: step 2/4. In terms of biological role, catalyzes the isomerization between 2-isopropylmalate and 3-isopropylmalate, via the formation of 2-isopropylmaleate. This is 3-isopropylmalate dehydratase small subunit from Rhodopseudomonas palustris (strain HaA2).